An 811-amino-acid polypeptide reads, in one-letter code: N-terminal acetyltransferase B complex subunit arm1 (811 aa).

This sequence belongs to the MDM20/NAA25 family. Component of the N-terminal acetyltransferase B (NatB) complex.

The protein localises to the cytoplasm. Its function is as follows. Non-catalytic subunit of the NatB N-terminal acetyltransferase, which catalyzes acetylation of the amino-terminal methionine residues of all proteins beginning with Met-Asp or Met-Glu and of some proteins beginning with Met-Asn or Met-Met. This is N-terminal acetyltransferase B complex subunit arm1 (arm1) from Schizosaccharomyces pombe (strain 972 / ATCC 24843) (Fission yeast).